The chain runs to 366 residues: MTPEHLPTEQYEAQLAEKVVRLQSMMAPFSDLVPEVFRSPVSHYRMRAEFRIWHDGDDLYHIIFDQQTKSRIRVDSFPAASELINQLMTAMIAGVRNNPILRHKLFQIDYLTTLSNQAVVSLLYHKKLDDEWRQQAEALRDALRAQNLNVHLIGRATKTKIALDQDYIDERLPIAGKEMIYRQVENSFTQPNAAMNIQMLEWALDVTKGSKGDLLELYCGNGNFSLALARNFDRVLATEIAKPSVAAAQYNIAANHIDNVQIIRMAAEEFTQAMNGVREFNRLQGIDLKSYQCETIFVDPPRSGLDSETEKMVQAYPRILYISCNPETLCKNLETLSQTHKVERLALFDQFPYTHHMECGVLLTAK.

5 residues coordinate S-adenosyl-L-methionine: Q190, Y218, N223, E239, and D299. The active-site Nucleophile is C324. The Proton acceptor role is filled by E358.

The protein belongs to the class I-like SAM-binding methyltransferase superfamily. RNA M5U methyltransferase family. TrmA subfamily.

It carries out the reaction uridine(54) in tRNA + S-adenosyl-L-methionine = 5-methyluridine(54) in tRNA + S-adenosyl-L-homocysteine + H(+). The enzyme catalyses uridine(341) in tmRNA + S-adenosyl-L-methionine = 5-methyluridine(341) in tmRNA + S-adenosyl-L-homocysteine + H(+). In terms of biological role, dual-specificity methyltransferase that catalyzes the formation of 5-methyluridine at position 54 (m5U54) in all tRNAs, and that of position 341 (m5U341) in tmRNA (transfer-mRNA). The polypeptide is tRNA/tmRNA (uracil-C(5))-methyltransferase (Escherichia coli (strain UTI89 / UPEC)).